Reading from the N-terminus, the 30-residue chain is Ribonuclease pancreatic (30 aa).

Residues 1–13 show a composition bias toward basic and acidic residues; it reads KETAAAKFERQHM. Positions 1-21 are disordered; it reads KETAAAKFERQHMDPAPAAAX. The substrate site is built by K7 and R10. H12 (proton acceptor) is an active-site residue.

The protein belongs to the pancreatic ribonuclease family. Monomer. Interacts with and forms tight 1:1 complexes with RNH1. Dimerization of two such complexes may occur. Interaction with RNH1 inhibits this protein. In terms of tissue distribution, pancreas.

Its subcellular location is the secreted. It carries out the reaction an [RNA] containing cytidine + H2O = an [RNA]-3'-cytidine-3'-phosphate + a 5'-hydroxy-ribonucleotide-3'-[RNA].. It catalyses the reaction an [RNA] containing uridine + H2O = an [RNA]-3'-uridine-3'-phosphate + a 5'-hydroxy-ribonucleotide-3'-[RNA].. Endonuclease that catalyzes the cleavage of RNA on the 3' side of pyrimidine nucleotides. Acts on single-stranded and double-stranded RNA. The protein is Ribonuclease pancreatic (RNASE1) of Odocoileus virginianus virginianus (Virginia white-tailed deer).